Here is a 453-residue protein sequence, read N- to C-terminus: Armadillo repeat-containing X-linked protein 1 (453 aa).

The Mitochondrial intermembrane segment spans residues 1-6 (MGRTRE). Mitochondrion outer membrane (MOM)-targeting sequence regions lie at residues 1–6 (MGRTRE) and 26–36 (RLAWGRDENEK). The chain crosses the membrane as a helical; Signal-anchor span at residues 7-29 (AGCVAAGVVIGAGACYCVYRLAW). Over 30 to 453 (GRDENEKIWD…VKVLKVLTKL (424 aa)) the chain is Cytoplasmic. 2 disordered regions span residues 58 to 77 (AKTN…SEVK) and 132 to 182 (ISGN…RAPA). A compositionally biased stretch (basic residues) spans 167 to 177 (GKSKGKARSKS). ARM repeat units follow at residues 195–235 (PYKI…NNAA), 237–276 (SFNQ…NLSV), 358–398 (PAMT…NIND), and 415–453 (SSLF…LTKL).

Belongs to the eutherian X-chromosome-specific Armcx family. In terms of assembly, interacts with MIRO1. Expressed at high levels ovary, heart, testis, prostate, brain, spleen and colon. Expressed at very low levels in liver and thymus. Not expressed in peripheral blood leukocytes. Not or reduced expressed in lung, prostate, colon, pancreas and ovarian carcinomas.

The protein localises to the mitochondrion. Its subcellular location is the mitochondrion outer membrane. In terms of biological role, regulates mitochondrial transport during axon regeneration. Increases the proportion of motile mitochondria by recruiting stationary mitochondria into the motile pool. Enhances mitochondria movement and neurite growth in both adult axons and embryonic neurons. Promotes neuronal survival and axon regeneration after nerve injury. May link mitochondria to the Trak1-kinesin motor complex via its interaction with MIRO1. This chain is Armadillo repeat-containing X-linked protein 1 (ARMCX1), found in Homo sapiens (Human).